The chain runs to 200 residues: Arylesterase (200 aa).

A signal peptide spans 1-19 (MIRLLSLVLFFCLSAASQA). Ser-29 (nucleophile) is an active-site residue. Residues Asp-176 and His-179 contribute to the active site.

The protein belongs to the 'GDSL' lipolytic enzyme family. As to quaternary structure, homodimer.

The enzyme catalyses a phenyl acetate + H2O = a phenol + acetate + H(+). Its function is as follows. Favors the hydrolysis of several arylesters. The protein is Arylesterase of Vibrio mimicus.